Reading from the N-terminus, the 63-residue chain is Prokaryotic ubiquitin-like protein Pup (63 aa).

The span at M1–G11 shows a compositional bias: basic and acidic residues. The interval M1–D36 is disordered. Residues S20 to Y57 are ARC ATPase binding. Positions V23–E51 form a coiled coil. Q63 carries the deamidated glutamine modification. Residue Q63 forms an Isoglutamyl lysine isopeptide (Gln-Lys) (interchain with K-? in acceptor proteins) linkage.

This sequence belongs to the prokaryotic ubiquitin-like protein family. Strongly interacts with the proteasome-associated ATPase ARC through a hydrophobic interface; the interacting region of Pup lies in its C-terminal half. There is one Pup binding site per ARC hexamer ring. In terms of processing, is modified by deamidation of its C-terminal glutamine to glutamate by the deamidase Dop, a prerequisite to the subsequent pupylation process.

Its pathway is protein degradation; proteasomal Pup-dependent pathway. Protein modifier that is covalently attached to lysine residues of substrate proteins, thereby targeting them for proteasomal degradation. The tagging system is termed pupylation. The protein is Prokaryotic ubiquitin-like protein Pup of Mycobacterium leprae (strain Br4923).